A 713-amino-acid polypeptide reads, in one-letter code: Pro-neuregulin-3, membrane-bound isoform (713 aa).

Topologically, residues 1–362 are extracellular; the sequence is MSEGAAGASP…MESEDVYQRQ (362 aa). 3 disordered regions span residues 28–48, 119–220, and 251–282; these read AAAA…AAEP, SSFP…STQA, and AAAS…TTYS. Positions 34-44 are enriched in gly residues; sequence AGGGPDGGGEG. The span at 127 to 148 shows a compositional bias: low complexity; the sequence is TTTTTTSTTSPATPSAGGAASS. The segment covering 149-163 has biased composition (polar residues); that stretch reads RTPNRISTRLTTITR. Low complexity-rich tracts occupy residues 195-207 and 254-274; these read STTA…STPG and SSSS…STSP. Residues 288–331 form the EGF-like domain; it reads HFKPCRDKDLAYCLNDGECFVIETLTGSHKHCRCKEGYQGVRCD. Disulfide bonds link cysteine 292–cysteine 306, cysteine 300–cysteine 319, and cysteine 321–cysteine 330. The chain crosses the membrane as a helical span at residues 363–383; that stretch reads VLSISCIIFGIVIVGMFCAAF. Over 384 to 713 the chain is Cytoplasmic; it reads YFKSKKQAKQ…EIQRDSVLTK (330 aa). Positions 449 to 496 are disordered; the sequence is SAPQSFPEVTSPDRGSQPIKHHSPGQRSGMLHRNTFRRAPPSPRSRLG.

The protein belongs to the neuregulin family. Interacts with ERBB4. Proteolytic cleavage close to the plasma membrane on the external face leads to the release of the soluble growth factor form. In terms of processing, extensive glycosylation precedes the proteolytic cleavage. As to expression, expressed in sympathetic, motor, and sensory neurons.

The protein localises to the cell membrane. The protein resides in the secreted. Functionally, direct ligand for the ERBB4 tyrosine kinase receptor. Binding results in ligand-stimulated tyrosine phosphorylation and activation of the receptor. Does not bind to the EGF receptor, ERBB2 or ERBB3 receptors. The chain is Pro-neuregulin-3, membrane-bound isoform (Nrg3) from Mus musculus (Mouse).